Consider the following 303-residue polypeptide: ADP-ribosyl cyclase/cyclic ADP-ribose hydrolase 1 (303 aa).

Residues 1 to 21 lie on the Cytoplasmic side of the membrane; that stretch reads MANYEFSQVSEDRPGCRLTRK. Residues 22–44 traverse the membrane as a helical; Signal-anchor for type II membrane protein segment; the sequence is AQIGLGVGLLLLVALVVVVVIVL. At 45 to 303 the chain is on the extracellular side; that stretch reads WPRSPLVWKG…PEHPSCRLNV (259 aa). Disulfide bonds link cysteine 69/cysteine 85, cysteine 102/cysteine 183, and cysteine 163/cysteine 176. The N-linked (GlcNAc...) asparagine glycan is linked to asparagine 103. The active site involves cysteine 122. N-linked (GlcNAc...) asparagine glycosylation is present at asparagine 123. Residue cysteine 204 is part of the active site. 2 N-linked (GlcNAc...) asparagine glycosylation sites follow: asparagine 212 and asparagine 222. 2 cysteine pairs are disulfide-bonded: cysteine 257-cysteine 278 and cysteine 290-cysteine 299.

The protein belongs to the ADP-ribosyl cyclase family. As to quaternary structure, homodimer. As to expression, spleen, liver, heart, thymus, thyroid gland, ileum, colon, cerebellum, salivary gland, adrenal gland, jejunum, islets of Langerhans and osteoclasts.

Its subcellular location is the cell membrane. The catalysed reaction is NAD(+) = cyclic ADP-beta-D-ribose + nicotinamide + H(+). It catalyses the reaction nicotinate + NADP(+) = nicotinate-adenine dinucleotide phosphate + nicotinamide. It carries out the reaction NAD(+) + H2O = ADP-D-ribose + nicotinamide + H(+). With respect to regulation, both NAADP and cADPR synthesis are inhibited by nicotinic acid. Functionally, synthesizes the second messengers cyclic ADP-ribose and nicotinate-adenine dinucleotide phosphate, the former a second messenger for glucose-induced insulin secretion, the latter a Ca(2+) mobilizer. Also has cADPR hydrolase activity. Its function is as follows. Regulates osteoclastic bone resorption, probably via production of cyclic ADP-ribose and triggering of a cytosolic calcium ion signal through ryanodine receptor activation. The chain is ADP-ribosyl cyclase/cyclic ADP-ribose hydrolase 1 (Cd38) from Rattus norvegicus (Rat).